Consider the following 124-residue polypeptide: Small ribosomal subunit protein bS16 (124 aa).

A disordered region spans residues 88–124 (VPEQTKQAQPKAKAQERLREAEEKARAAAEAAASAEG). The span at 100-114 (KAQERLREAEEKARA) shows a compositional bias: basic and acidic residues. Residues 115-124 (AAEAAASAEG) are compositionally biased toward low complexity.

This sequence belongs to the bacterial ribosomal protein bS16 family.

The polypeptide is Small ribosomal subunit protein bS16 (Rhodospirillum rubrum (strain ATCC 11170 / ATH 1.1.1 / DSM 467 / LMG 4362 / NCIMB 8255 / S1)).